We begin with the raw amino-acid sequence, 319 residues long: Lipoyl synthase (319 aa).

[4Fe-4S] cluster contacts are provided by Cys61, Cys66, Cys72, Cys87, Cys91, Cys94, and Ser300. The Radical SAM core domain maps to 73-289 (WDKKHATFMI…ESVAYSKGFL (217 aa)).

It belongs to the radical SAM superfamily. Lipoyl synthase family. [4Fe-4S] cluster is required as a cofactor.

It is found in the cytoplasm. It catalyses the reaction [[Fe-S] cluster scaffold protein carrying a second [4Fe-4S](2+) cluster] + N(6)-octanoyl-L-lysyl-[protein] + 2 oxidized [2Fe-2S]-[ferredoxin] + 2 S-adenosyl-L-methionine + 4 H(+) = [[Fe-S] cluster scaffold protein] + N(6)-[(R)-dihydrolipoyl]-L-lysyl-[protein] + 4 Fe(3+) + 2 hydrogen sulfide + 2 5'-deoxyadenosine + 2 L-methionine + 2 reduced [2Fe-2S]-[ferredoxin]. The protein operates within protein modification; protein lipoylation via endogenous pathway; protein N(6)-(lipoyl)lysine from octanoyl-[acyl-carrier-protein]: step 2/2. Functionally, catalyzes the radical-mediated insertion of two sulfur atoms into the C-6 and C-8 positions of the octanoyl moiety bound to the lipoyl domains of lipoate-dependent enzymes, thereby converting the octanoylated domains into lipoylated derivatives. The sequence is that of Lipoyl synthase from Rhodopseudomonas palustris (strain BisB18).